The chain runs to 962 residues: Glycine dehydrogenase (decarboxylating) (962 aa).

Position 709 is an N6-(pyridoxal phosphate)lysine (Lys-709).

Belongs to the GcvP family. The glycine cleavage system is composed of four proteins: P, T, L and H. The cofactor is pyridoxal 5'-phosphate.

The enzyme catalyses N(6)-[(R)-lipoyl]-L-lysyl-[glycine-cleavage complex H protein] + glycine + H(+) = N(6)-[(R)-S(8)-aminomethyldihydrolipoyl]-L-lysyl-[glycine-cleavage complex H protein] + CO2. In terms of biological role, the glycine cleavage system catalyzes the degradation of glycine. The P protein binds the alpha-amino group of glycine through its pyridoxal phosphate cofactor; CO(2) is released and the remaining methylamine moiety is then transferred to the lipoamide cofactor of the H protein. The sequence is that of Glycine dehydrogenase (decarboxylating) from Shewanella oneidensis (strain ATCC 700550 / JCM 31522 / CIP 106686 / LMG 19005 / NCIMB 14063 / MR-1).